The chain runs to 1024 residues: Carbamoyl phosphate synthase large chain (1024 aa).

The interval 1–402 (MPKRTDLQTI…SLQKALRSTE (402 aa)) is carboxyphosphate synthetic domain. 12 residues coordinate ATP: R129, R169, G175, G176, E208, I210, E215, G241, V242, H243, Q285, and E299. The region spanning 133 to 328 (QAAMKKIGVE…IAKIAALLAV (196 aa)) is the ATP-grasp 1 domain. Mg(2+) is bound by residues Q285, E299, and N301. Mn(2+)-binding residues include Q285, E299, and N301. The segment at 403-546 (GDIRGVYAEM…YSTYEWEDEV (144 aa)) is oligomerization domain. The interval 547–929 (APTDKPKVVI…AFYRAQLGAK (383 aa)) is carbamoyl phosphate synthetic domain. Positions 671-863 (NALCERLGLP…LAKSAARIAA (193 aa)) constitute an ATP-grasp 2 domain. The ATP site is built by R707, Q747, L749, E754, G779, V780, H781, S782, Q822, and E834. Residues Q822, E834, and N836 each coordinate Mg(2+). 3 residues coordinate Mn(2+): Q822, E834, and N836. In terms of domain architecture, MGS-like spans 930 to 1024 (NYLPLEGTAL…GVRSLQEWVK (95 aa)). The segment at 930–1024 (NYLPLEGTAL…GVRSLQEWVK (95 aa)) is allosteric domain.

The protein belongs to the CarB family. Composed of two chains; the small (or glutamine) chain promotes the hydrolysis of glutamine to ammonia, which is used by the large (or ammonia) chain to synthesize carbamoyl phosphate. Tetramer of heterodimers (alpha,beta)4. Mg(2+) serves as cofactor. Requires Mn(2+) as cofactor.

The catalysed reaction is hydrogencarbonate + L-glutamine + 2 ATP + H2O = carbamoyl phosphate + L-glutamate + 2 ADP + phosphate + 2 H(+). The enzyme catalyses hydrogencarbonate + NH4(+) + 2 ATP = carbamoyl phosphate + 2 ADP + phosphate + 2 H(+). The protein operates within amino-acid biosynthesis; L-arginine biosynthesis; carbamoyl phosphate from bicarbonate: step 1/1. Its pathway is pyrimidine metabolism; UMP biosynthesis via de novo pathway; (S)-dihydroorotate from bicarbonate: step 1/3. Functionally, large subunit of the glutamine-dependent carbamoyl phosphate synthetase (CPSase). CPSase catalyzes the formation of carbamoyl phosphate from the ammonia moiety of glutamine, carbonate, and phosphate donated by ATP, constituting the first step of 2 biosynthetic pathways, one leading to arginine and/or urea and the other to pyrimidine nucleotides. The large subunit (synthetase) binds the substrates ammonia (free or transferred from glutamine from the small subunit), hydrogencarbonate and ATP and carries out an ATP-coupled ligase reaction, activating hydrogencarbonate by forming carboxy phosphate which reacts with ammonia to form carbamoyl phosphate. The chain is Carbamoyl phosphate synthase large chain from Deinococcus radiodurans (strain ATCC 13939 / DSM 20539 / JCM 16871 / CCUG 27074 / LMG 4051 / NBRC 15346 / NCIMB 9279 / VKM B-1422 / R1).